Reading from the N-terminus, the 407-residue chain is Chorismate synthase (407 aa).

Residues Arg-40 and Arg-46 each contribute to the NADP(+) site. FMN is bound by residues 140 to 142 (RSS), 261 to 262 (QA), Gly-305, 320 to 324 (KPIST), and Arg-346.

This sequence belongs to the chorismate synthase family. In terms of assembly, homotetramer. FMNH2 is required as a cofactor.

It carries out the reaction 5-O-(1-carboxyvinyl)-3-phosphoshikimate = chorismate + phosphate. The protein operates within metabolic intermediate biosynthesis; chorismate biosynthesis; chorismate from D-erythrose 4-phosphate and phosphoenolpyruvate: step 7/7. Its function is as follows. Catalyzes the anti-1,4-elimination of the C-3 phosphate and the C-6 proR hydrogen from 5-enolpyruvylshikimate-3-phosphate (EPSP) to yield chorismate, which is the branch point compound that serves as the starting substrate for the three terminal pathways of aromatic amino acid biosynthesis. This reaction introduces a second double bond into the aromatic ring system. In Corynebacterium glutamicum (strain R), this protein is Chorismate synthase.